Reading from the N-terminus, the 476-residue chain is Probable serine carboxypeptidase CPVL (476 aa).

A signal peptide spans 1-22 (MVGAMWKVIVSLVLLMPGPCDG). Residues asparagine 81 and asparagine 132 are each glycosylated (N-linked (GlcNAc...) asparagine). Serine 204 is an active-site residue. N-linked (GlcNAc...) asparagine glycans are attached at residues asparagine 307 and asparagine 346. Catalysis depends on residues aspartate 388 and histidine 448.

Belongs to the peptidase S10 family. In terms of tissue distribution, expressed in macrophages but not in other leukocytes. Abundantly expressed in heart and kidney. Also expressed in spleen, leukocytes, and placenta.

In terms of biological role, may be involved in the digestion of phagocytosed particles in the lysosome, participation in an inflammatory protease cascade, and trimming of peptides for antigen presentation. This is Probable serine carboxypeptidase CPVL (CPVL) from Homo sapiens (Human).